The following is a 391-amino-acid chain: Galactokinase (391 aa).

Substrate is bound at residue 34–37 (EHTD). Residue 121–127 (GAGLSSS) participates in ATP binding. Mg(2+) is bound by residues Ser127 and Glu159. Asp171 functions as the Proton acceptor in the catalytic mechanism. Tyr220 contacts substrate.

The protein belongs to the GHMP kinase family. GalK subfamily.

The protein resides in the cytoplasm. It carries out the reaction alpha-D-galactose + ATP = alpha-D-galactose 1-phosphate + ADP + H(+). It participates in carbohydrate metabolism; galactose metabolism. In terms of biological role, catalyzes the transfer of the gamma-phosphate of ATP to D-galactose to form alpha-D-galactose-1-phosphate (Gal-1-P). This chain is Galactokinase, found in Roseiflexus sp. (strain RS-1).